Reading from the N-terminus, the 234-residue chain is Probable septum site-determining protein MinC (234 aa).

Belongs to the MinC family. In terms of assembly, interacts with MinD and FtsZ.

Its function is as follows. Cell division inhibitor that blocks the formation of polar Z ring septums. Rapidly oscillates between the poles of the cell to destabilize FtsZ filaments that have formed before they mature into polar Z rings. Prevents FtsZ polymerization. This is Probable septum site-determining protein MinC from Pseudoalteromonas translucida (strain TAC 125).